A 241-amino-acid polypeptide reads, in one-letter code: Triosephosphate isomerase (241 aa).

Substrate is bound at residue 9–11 (NWK). H96 serves as the catalytic Electrophile. Residue E165 is the Proton acceptor of the active site. Substrate contacts are provided by residues G171, S204, and 225–226 (GG).

Belongs to the triosephosphate isomerase family. As to quaternary structure, homodimer.

Its subcellular location is the cytoplasm. It catalyses the reaction D-glyceraldehyde 3-phosphate = dihydroxyacetone phosphate. Its pathway is carbohydrate biosynthesis; gluconeogenesis. It functions in the pathway carbohydrate degradation; glycolysis; D-glyceraldehyde 3-phosphate from glycerone phosphate: step 1/1. Involved in the gluconeogenesis. Catalyzes stereospecifically the conversion of dihydroxyacetone phosphate (DHAP) to D-glyceraldehyde-3-phosphate (G3P). The protein is Triosephosphate isomerase of Gloeothece citriformis (strain PCC 7424) (Cyanothece sp. (strain PCC 7424)).